Here is a 202-residue protein sequence, read N- to C-terminus: Holliday junction branch migration complex subunit RuvA (202 aa).

Residues 1-62 (MYEYLHGLIT…DTAQTLYGFS (62 aa)) form a domain I region. The tract at residues 63–141 (DFAEKQLFLK…DLAPATDDNT (79 aa)) is domain II. The flexible linker stretch occupies residues 142–151 (LFTPEVAPTT). The domain III stretch occupies residues 152–202 (TENPQLADALAALTALGYRETAVKKITAQLRQFNGQTTNDYLSEGLRLLTK).

The protein belongs to the RuvA family. As to quaternary structure, homotetramer. Forms an RuvA(8)-RuvB(12)-Holliday junction (HJ) complex. HJ DNA is sandwiched between 2 RuvA tetramers; dsDNA enters through RuvA and exits via RuvB. An RuvB hexamer assembles on each DNA strand where it exits the tetramer. Each RuvB hexamer is contacted by two RuvA subunits (via domain III) on 2 adjacent RuvB subunits; this complex drives branch migration. In the full resolvosome a probable DNA-RuvA(4)-RuvB(12)-RuvC(2) complex forms which resolves the HJ.

It localises to the cytoplasm. Its function is as follows. The RuvA-RuvB-RuvC complex processes Holliday junction (HJ) DNA during genetic recombination and DNA repair, while the RuvA-RuvB complex plays an important role in the rescue of blocked DNA replication forks via replication fork reversal (RFR). RuvA specifically binds to HJ cruciform DNA, conferring on it an open structure. The RuvB hexamer acts as an ATP-dependent pump, pulling dsDNA into and through the RuvAB complex. HJ branch migration allows RuvC to scan DNA until it finds its consensus sequence, where it cleaves and resolves the cruciform DNA. This is Holliday junction branch migration complex subunit RuvA from Levilactobacillus brevis (strain ATCC 367 / BCRC 12310 / CIP 105137 / JCM 1170 / LMG 11437 / NCIMB 947 / NCTC 947) (Lactobacillus brevis).